The primary structure comprises 501 residues: Lysine--tRNA ligase (501 aa).

Glu-411 and Glu-418 together coordinate Mg(2+).

Belongs to the class-II aminoacyl-tRNA synthetase family. Homodimer. It depends on Mg(2+) as a cofactor.

Its subcellular location is the cytoplasm. The catalysed reaction is tRNA(Lys) + L-lysine + ATP = L-lysyl-tRNA(Lys) + AMP + diphosphate. In Pseudomonas aeruginosa (strain LESB58), this protein is Lysine--tRNA ligase.